Here is a 251-residue protein sequence, read N- to C-terminus: 1-(5-phosphoribosyl)-5-[(5-phosphoribosylamino)methylideneamino] imidazole-4-carboxamide isomerase (251 aa).

Residue Asp8 is the Proton acceptor of the active site. The Proton donor role is filled by Asp131.

It belongs to the HisA/HisF family.

It localises to the cytoplasm. The catalysed reaction is 1-(5-phospho-beta-D-ribosyl)-5-[(5-phospho-beta-D-ribosylamino)methylideneamino]imidazole-4-carboxamide = 5-[(5-phospho-1-deoxy-D-ribulos-1-ylimino)methylamino]-1-(5-phospho-beta-D-ribosyl)imidazole-4-carboxamide. Its pathway is amino-acid biosynthesis; L-histidine biosynthesis; L-histidine from 5-phospho-alpha-D-ribose 1-diphosphate: step 4/9. This is 1-(5-phosphoribosyl)-5-[(5-phosphoribosylamino)methylideneamino] imidazole-4-carboxamide isomerase from Burkholderia lata (strain ATCC 17760 / DSM 23089 / LMG 22485 / NCIMB 9086 / R18194 / 383).